An 86-amino-acid polypeptide reads, in one-letter code: Cell division topological specificity factor (86 aa).

This sequence belongs to the MinE family.

In terms of biological role, prevents the cell division inhibition by proteins MinC and MinD at internal division sites while permitting inhibition at polar sites. This ensures cell division at the proper site by restricting the formation of a division septum at the midpoint of the long axis of the cell. The sequence is that of Cell division topological specificity factor from Polaromonas sp. (strain JS666 / ATCC BAA-500).